The sequence spans 797 residues: Short transient receptor potential channel 4-associated protein (797 aa).

Position 2 is an N-acetylalanine (A2). Residues 2 to 400 (AAAPVAAGSG…VLYVLCVLLM (399 aa)) are interaction with TNFRSF1A.

In terms of assembly, component of the DCX(TRPC4AP) E3 ubiquitin ligase complex, at least composed of CUL4A, DDB1, TRPC4AP/TRUSS and RBX1. Interacts with MYC. Constitutively associated with TNFRSF1A. Directly interacts with TRADD, TRAF2, CHUK, IKBKB and IKBKG. Interacts with TRPC1, TRPC4 and TRPC5. (Microbial infection) Interacts with Hepatitis B virus (HBV) protein X; leading to prevent ubiquitination of TRPC4AP by SKP2. Post-translationally, phosphorylated by GSK3B; phosphorylation is required for ubiquitination. Ubiquitinated by a SCF (SKP1-CUL1-F-box protein) E3 ubiquitin-protein ligase containing SKP2, leading to its degradation. Phosphorylation by GSK3B is required for ubiquitination.

Its subcellular location is the cytoplasm. It localises to the perinuclear region. Its pathway is protein modification; protein ubiquitination. Functionally, substrate-recognition component of a DCX (DDB1-CUL4-X-box) E3 ubiquitin-protein ligase complex required for cell cycle control. The DCX(TRPC4AP) complex specifically mediates the polyubiquitination and subsequent degradation of MYC as part of the DesCEND (destruction via C-end degrons) pathway. The DesCEND (destruction via C-end degrons) pathway recognizes a C-degron located at the extreme C terminus of target proteins, leading to their ubiquitination and degradation. The DCX(TRPC4AP) complex specifically recognizes proteins with an arginine at the minus 3 position (R-3 motif) at the C-terminus, such as MYC, leading to their ubiquitination and degradation. Also participates in the activation of NFKB1 in response to ligation of TNFRSF1A, possibly by linking TNFRSF1A to the IKK signalosome. Involved in JNK activation via its interaction with TRAF2. Also involved in elevation of endoplasmic reticulum Ca(2+) storage reduction in response to CHRM1. In Homo sapiens (Human), this protein is Short transient receptor potential channel 4-associated protein.